Here is a 201-residue protein sequence, read N- to C-terminus: Imidazole glycerol phosphate synthase subunit HisH (201 aa).

The Glutamine amidotransferase type-1 domain occupies 1-201 (MVFIADYGAG…LQVLKNFAEF (201 aa)). Catalysis depends on C79, which acts as the Nucleophile. Residues H183 and E185 contribute to the active site.

In terms of assembly, heterodimer of HisH and HisF.

The protein localises to the cytoplasm. The catalysed reaction is 5-[(5-phospho-1-deoxy-D-ribulos-1-ylimino)methylamino]-1-(5-phospho-beta-D-ribosyl)imidazole-4-carboxamide + L-glutamine = D-erythro-1-(imidazol-4-yl)glycerol 3-phosphate + 5-amino-1-(5-phospho-beta-D-ribosyl)imidazole-4-carboxamide + L-glutamate + H(+). The enzyme catalyses L-glutamine + H2O = L-glutamate + NH4(+). Its pathway is amino-acid biosynthesis; L-histidine biosynthesis; L-histidine from 5-phospho-alpha-D-ribose 1-diphosphate: step 5/9. Functionally, IGPS catalyzes the conversion of PRFAR and glutamine to IGP, AICAR and glutamate. The HisH subunit catalyzes the hydrolysis of glutamine to glutamate and ammonia as part of the synthesis of IGP and AICAR. The resulting ammonia molecule is channeled to the active site of HisF. This chain is Imidazole glycerol phosphate synthase subunit HisH, found in Chlorobaculum tepidum (strain ATCC 49652 / DSM 12025 / NBRC 103806 / TLS) (Chlorobium tepidum).